We begin with the raw amino-acid sequence, 396 residues long: Phosphoglycerate kinase (396 aa).

Residues 22-24, R37, 60-63, R118, and R151 each bind substrate; these read DFN and HFGR. ATP contacts are provided by residues K201, E322, and 352-355; that span reads GGDS.

This sequence belongs to the phosphoglycerate kinase family. In terms of assembly, monomer.

The protein resides in the cytoplasm. It carries out the reaction (2R)-3-phosphoglycerate + ATP = (2R)-3-phospho-glyceroyl phosphate + ADP. It functions in the pathway carbohydrate degradation; glycolysis; pyruvate from D-glyceraldehyde 3-phosphate: step 2/5. This is Phosphoglycerate kinase from Wolbachia pipientis subsp. Culex pipiens (strain wPip).